A 347-amino-acid polypeptide reads, in one-letter code: NADH-ubiquinone oxidoreductase chain 2 (347 aa).

10 helical membrane passes run 3–23, 26–46, 67–87, 96–116, 149–169, 178–198, 200–220, 239–259, 274–294, and 325–345; these read PLIF…TMIS, WLLI…IIMM, SMLL…WTIM, YMMT…FWVP, LNLN…GWGG, IMAY…MYNT, LMML…ALFI, ILTT…PLSG, NMLL…YFYM, and LSPT…MMLI.

This sequence belongs to the complex I subunit 2 family. Core subunit of respiratory chain NADH dehydrogenase (Complex I) which is composed of 45 different subunits. Interacts with TMEM242.

It is found in the mitochondrion inner membrane. It catalyses the reaction a ubiquinone + NADH + 5 H(+)(in) = a ubiquinol + NAD(+) + 4 H(+)(out). In terms of biological role, core subunit of the mitochondrial membrane respiratory chain NADH dehydrogenase (Complex I) which catalyzes electron transfer from NADH through the respiratory chain, using ubiquinone as an electron acceptor. Essential for the catalytic activity and assembly of complex I. In Dasypus novemcinctus (Nine-banded armadillo), this protein is NADH-ubiquinone oxidoreductase chain 2.